Reading from the N-terminus, the 198-residue chain is RNA 2',3'-cyclic phosphodiesterase (198 aa).

The active-site Proton donor is the H39. 2 consecutive short sequence motifs (HXTX) follow at residues H39–L42 and H130–L133. H130 (proton acceptor) is an active-site residue.

This sequence belongs to the 2H phosphoesterase superfamily. ThpR family.

It catalyses the reaction a 3'-end 2',3'-cyclophospho-ribonucleotide-RNA + H2O = a 3'-end 2'-phospho-ribonucleotide-RNA + H(+). Hydrolyzes RNA 2',3'-cyclic phosphodiester to an RNA 2'-phosphomonoester. The chain is RNA 2',3'-cyclic phosphodiesterase from Thermus thermophilus (strain ATCC 27634 / DSM 579 / HB8).